Here is a 476-residue protein sequence, read N- to C-terminus: Aspartyl/glutamyl-tRNA(Asn/Gln) amidotransferase subunit B (476 aa).

It belongs to the GatB/GatE family. GatB subfamily. In terms of assembly, heterotrimer of A, B and C subunits.

The catalysed reaction is L-glutamyl-tRNA(Gln) + L-glutamine + ATP + H2O = L-glutaminyl-tRNA(Gln) + L-glutamate + ADP + phosphate + H(+). The enzyme catalyses L-aspartyl-tRNA(Asn) + L-glutamine + ATP + H2O = L-asparaginyl-tRNA(Asn) + L-glutamate + ADP + phosphate + 2 H(+). Allows the formation of correctly charged Asn-tRNA(Asn) or Gln-tRNA(Gln) through the transamidation of misacylated Asp-tRNA(Asn) or Glu-tRNA(Gln) in organisms which lack either or both of asparaginyl-tRNA or glutaminyl-tRNA synthetases. The reaction takes place in the presence of glutamine and ATP through an activated phospho-Asp-tRNA(Asn) or phospho-Glu-tRNA(Gln). The chain is Aspartyl/glutamyl-tRNA(Asn/Gln) amidotransferase subunit B from Neisseria meningitidis serogroup C / serotype 2a (strain ATCC 700532 / DSM 15464 / FAM18).